The chain runs to 2773 residues: Peramine synthetase A (2773 aa).

The segment at 246–644 is adenylation 1; the sequence is FEDQVYSQPL…GRKDAQVKIR (399 aa). In terms of domain architecture, Carrier 1 spans 774–850; that stretch reads QPTCEMEERM…DLAKNCSQTL (77 aa). At Ser811 the chain carries O-(pantetheine 4'-phosphoryl)serine. The condensation stretch occupies residues 888–1301; it reads QDAYPCTRLQ…MSSAEDLEQI (414 aa). The tract at residues 1321–1720 is adenylation 2; sequence ADQVQARPDS…GRKDTQVKVR (400 aa). The segment at 1810-1949 is methylation (Met) domain; that stretch reads IGRDFVGWSS…IIQHLASLGS (140 aa). Residues 2250-2271 are disordered; the sequence is MLSESLQQKAPPTARKRLPSTA. Residues 2267 to 2345 form the Carrier 2 domain; the sequence is LPSTAPERAM…HLLQTAAAGV (79 aa). Ser2304 carries the post-translational modification O-(pantetheine 4'-phosphoryl)serine. A thiesterase (TE) domain region spans residues 2397 to 2715; that stretch reads TVVLTGANGF…LQDLADTARS (319 aa).

This sequence belongs to the NRP synthetase family. It depends on pantetheine 4'-phosphate as a cofactor.

It catalyses the reaction (S)-1-pyrroline-5-carboxylate + L-arginine + S-adenosyl-L-methionine + 2 ATP = peramine + 2 AMP + S-adenosyl-L-homocysteine + 2 diphosphate + H2O + 2 H(+). Functionally, nonribosomal peptide synthetase involved in the biosynthesis of peramine, a pyrrolopyrazine synthesized in association with the grass host that protects the plant from insect herbivory. The single multifunctional NRPS perA seems to be responsible for all catalytic steps in the biosynthesis of peramine. The condensation domain of perA is proposed to catalyze formation of a peptide bond between 1-pyrroline-5-carboxylate and arginine. The methylation domain of perA would catalyze the N-methylation of the alpha-amino group of arginine. The reductase domain is proposed to be responsible for reduction of the thioester and the cyclization to form an iminium ion resulting in release from the peptide synthetase. Deprotonation of this intermediate and oxidation of the pyrroline ring would give rise to peramine. This final oxidation to give the pyrrole functionality may be spontaneous. The protein is Peramine synthetase A of Epichloe festucae (strain Fl1).